Here is a 372-residue protein sequence, read N- to C-terminus: ATP-sensitive inward rectifier potassium channel 1 (372 aa).

Residues 1–58 are Cytoplasmic-facing; that stretch reads MFKHLRRWFVTHIFGRSRQRARLVSKDGRCNIEFGNVDAQSRFIFFVDIWTTVLDLKW. Phosphoserine; by SGK1 is present on S25. A helical membrane pass occupies residues 59–83; sequence RYKMTVFITAFLGSWFLFGLLWYVV. The Extracellular segment spans residues 84 to 108; that stretch reads AYVHKDLPEFYPPDNRTPCVENING. N98 carries N-linked (GlcNAc...) asparagine glycosylation. Residues 109 to 120 constitute an intramembrane region (helical; Pore-forming); that stretch reads MTSAFLFSLETQ. The pore-forming intramembrane region spans 121-127; sequence VTIGYGF. A Selectivity filter motif is present at residues 122–127; it reads TIGYGF. Residues 128–136 lie on the Extracellular side of the membrane; it reads RFVTEQCAT. The helical transmembrane segment at 137 to 158 threads the bilayer; sequence AIFLLIFQSILGVIINSFMCGA. Over 159-372 the chain is Cytoplasmic; that stretch reads ILAKISRPKK…EVDETDDTQM (214 aa). The tract at residues 161 to 188 is polyphosphoinositide (PIP2)-binding; it reads AKISRPKKRAKTITFSKNAVISKRGGKL. 204–211 lines the ATP pocket; that stretch reads GSHIYGKL.

Belongs to the inward rectifier-type potassium channel (TC 1.A.2.1) family. KCNJ1 subfamily. Interacts with SGK1 and SLC9A3R2/NHERF2. Phosphorylation at Ser-25 by SGK1 is necessary for its expression at the cell membrane.

It is found in the cell membrane. It carries out the reaction K(+)(in) = K(+)(out). With respect to regulation, inhibited by WNK3. Activated by phosphatidylinositol 4,5 biphosphate (PtdIns(4,5)P2). Inward rectifier potassium channels are characterized by a greater tendency to allow potassium to flow into the cell rather than out of it. Their voltage dependence is regulated by the concentration of extracellular potassium; as external potassium is raised, the voltage range of the channel opening shifts to more positive voltages. The inward rectification is mainly due to the blockage of outward current by internal magnesium. This channel is activated by internal ATP and can be blocked by external barium. In the kidney, probably plays a major role in potassium homeostasis. The chain is ATP-sensitive inward rectifier potassium channel 1 (Kcnj1) from Mus musculus (Mouse).